Consider the following 368-residue polypeptide: Phospho-N-acetylmuramoyl-pentapeptide-transferase (368 aa).

A run of 9 helical transmembrane segments spans residues 2–22 (IALIIGMLVSLIVTLVGTPLL), 51–71 (TLGGVVINFAILLGWASSALY), 80–100 (PSWSAALVLFAMLSMGLLGFI), 117–137 (GGKFIGQFIFATIYAVLALLI), 167–187 (VAIILFVIWVNFLMTAWTNAV), 193–213 (LDGLAAGSSMIAFTGFGIIAF), 234–254 (PLDLTVIAVCAAVACFGFLWY), 271–291 (LGGLFAALSIATHTEFLAVVL), and 340–360 (FWMIELIFVLLALTIFYGDWV).

This sequence belongs to the glycosyltransferase 4 family. MraY subfamily. It depends on Mg(2+) as a cofactor.

It is found in the cell membrane. It catalyses the reaction UDP-N-acetyl-alpha-D-muramoyl-L-alanyl-gamma-D-glutamyl-meso-2,6-diaminopimeloyl-D-alanyl-D-alanine + di-trans,octa-cis-undecaprenyl phosphate = di-trans,octa-cis-undecaprenyl diphospho-N-acetyl-alpha-D-muramoyl-L-alanyl-D-glutamyl-meso-2,6-diaminopimeloyl-D-alanyl-D-alanine + UMP. The protein operates within cell wall biogenesis; peptidoglycan biosynthesis. Catalyzes the initial step of the lipid cycle reactions in the biosynthesis of the cell wall peptidoglycan: transfers peptidoglycan precursor phospho-MurNAc-pentapeptide from UDP-MurNAc-pentapeptide onto the lipid carrier undecaprenyl phosphate, yielding undecaprenyl-pyrophosphoryl-MurNAc-pentapeptide, known as lipid I. The sequence is that of Phospho-N-acetylmuramoyl-pentapeptide-transferase from Bifidobacterium longum (strain DJO10A).